The chain runs to 718 residues: Acetolactate synthase, mitochondrial (718 aa).

2 disordered regions span residues 1-53 (MLTR…YDTP) and 75-99 (QSSA…QAAP). Residues 32–45 (RYSNNIHTSSTQNA) show a composition bias toward polar residues. Low complexity predominate over residues 76–99 (SSASTAAASPAVRPQPAQHFQAAP). Glu173 is a binding site for thiamine diphosphate. Arg275 contacts FAD. The tract at residues 301–326 (VQPGHSPYLPSNPLNPSSQPSDPLPG) is disordered. Residues 306 to 325 (SPYLPSNPLNPSSQPSDPLP) are compositionally biased toward low complexity. FAD contacts are provided by residues 397 to 418 (HGSA…LGVR) and 449 to 468 (EIQP…VLGD). Residues 541 to 621 (QHQMWACQYY…VKVLLFNNEF (81 aa)) are thiamine pyrophosphate binding. Mg(2+)-binding residues include Asp592 and Asn619.

Belongs to the TPP enzyme family. Mg(2+) is required as a cofactor. The cofactor is thiamine diphosphate.

Its subcellular location is the mitochondrion. The enzyme catalyses 2 pyruvate + H(+) = (2S)-2-acetolactate + CO2. The protein operates within amino-acid biosynthesis; L-isoleucine biosynthesis; L-isoleucine from 2-oxobutanoate: step 1/4. It participates in amino-acid biosynthesis; L-valine biosynthesis; L-valine from pyruvate: step 1/4. The protein is Acetolactate synthase, mitochondrial (ILV2) of Cryptococcus neoformans var. grubii serotype A (strain H99 / ATCC 208821 / CBS 10515 / FGSC 9487) (Filobasidiella neoformans var. grubii).